We begin with the raw amino-acid sequence, 784 residues long: MSGGHQLQLAVLWPWLLMATLHAGFGHTGRVLAAAVESERSAEQKAVIRVIPLKMDPTGKLNLTLEGVFAGVAEVTPAEGKLMQSHPLYLCNASDDDNLEPGFISIVKLESPRRAPRPCLSLASKARMAGERGANAVLFDITEDRSAAEQLQQPLGLTKPVVLIWGSDAAKLMEFVYKNRKAYVWIELKEPPAGANYDVWILLTVVGTVFVIILASVLRIRCRPHHSRPDPLQQRTARAISQLATRRYQAGCRRARAEWPDSGSSCSSTPVCAICLEEFSEGQELRVISCLHEFHRTCVDPWLYQHRTCPLCMFNIVEGDSFSQAPAASPSYQEPGRRLHLIRQHPGHAHYHLPSAYLLGPSRTSVARTPRPRPFLPSQEPSMGSRHQRLPRTSHLRAPEEQQHLAVSPHPYAQGWGLNRLRCTSQHPAACPVALRRARPHESSGSGESYCTERSGYLADGPASDSSSGPCHGSSSDSVVNCTDVSLQGIHGSSSTFRSSLSSDFDPLVYCSPEGDLQGKGIQPSVTSRPRSLDSVVPRGETQVSSHIHYHRHRHHHYKRQFQWHGRKPGPETGIPQSMPAASHTQLEPSLPDQQLITPNPTASSMLPNPQRPRALTEPAPGLAEASSPSPSPKPNPSGLLNLQKSSLTVRHPHRKRRGGPSEPLPTSLPPDLTVHTACPVFPHYSPRLAYPWPPEVHPLMFRPPGPDRRLLHEVPGPCYSSSQPVWLYLNPCQPLGPCLPGEGHSKWTFDSPEGRRCPYSHCQVLPAQPGSEEELEELCEQAV.

The N-terminal stretch at 1–23 is a signal peptide; the sequence is MSGGHQLQLAVLWPWLLMATLHA. The Extracellular segment spans residues 24–197; the sequence is GFGHTGRVLA…LKEPPAGANY (174 aa). N-linked (GlcNAc...) asparagine glycosylation is found at asparagine 62 and asparagine 92. Cysteine 91 and cysteine 119 are joined by a disulfide. A helical membrane pass occupies residues 198–218; it reads DVWILLTVVGTVFVIILASVL. At 219-784 the chain is on the cytoplasmic side; it reads RIRCRPHHSR…ELEELCEQAV (566 aa). The segment at 272 to 313 adopts an RING-type; atypical zinc-finger fold; the sequence is CAICLEEFSEGQELRVISCLHEFHRTCVDPWLYQHRTCPLCM. Disordered stretches follow at residues 364–407, 459–478, and 516–671; these read TSVA…HLAV, ADGP…SSDS, and DLQG…SLPP. Over residues 386-395 the composition is skewed to basic residues; the sequence is RHQRLPRTSH. Positions 464 to 478 are enriched in low complexity; that stretch reads SDSSSGPCHGSSSDS. Residues 548–568 show a composition bias toward basic residues; it reads IHYHRHRHHHYKRQFQWHGRK. The segment covering 583–608 has biased composition (polar residues); the sequence is SHTQLEPSLPDQQLITPNPTASSMLP. Residues 618–629 show a composition bias toward low complexity; it reads EPAPGLAEASSP.

It belongs to the ZNRF3 family. As to quaternary structure, interacts with AKAP8L, NONO and SFPQ. Interacts with FZD5. Identified in a complex composed of RNF43, LGR5 and RSPO1. Interacts with RSPO2. Interacts with LMBR1L. Autoubiquitinated. In terms of tissue distribution, expressed in crypt base columnar cells of small intestinal epithelium. Crypt base columnar cells are small cycling cells residing between the terminally differentiated Paneth cells at crypt bottoms. Colocalizes with Lgr5-positive stem cells.

The protein resides in the cell membrane. It localises to the endoplasmic reticulum membrane. It is found in the nucleus envelope. The enzyme catalyses S-ubiquitinyl-[E2 ubiquitin-conjugating enzyme]-L-cysteine + [acceptor protein]-L-lysine = [E2 ubiquitin-conjugating enzyme]-L-cysteine + N(6)-ubiquitinyl-[acceptor protein]-L-lysine.. The protein operates within protein modification; protein ubiquitination. Its function is as follows. E3 ubiquitin-protein ligase that acts as a negative regulator of the Wnt signaling pathway by mediating the ubiquitination, endocytosis and subsequent degradation of Wnt receptor complex components Frizzled. Acts on both canonical and non-canonical Wnt signaling pathway. Along with RSPO2 and ZNRF3, constitutes a master switch that governs limb specification. This Mus musculus (Mouse) protein is E3 ubiquitin-protein ligase RNF43 (Rnf43).